Consider the following 225-residue polypeptide: Cbp/p300-interacting transactivator 2 (225 aa).

It belongs to the CITED family.

It is found in the nucleus. Its function is as follows. Transcriptional coactivator or corepressor of the p300/CBP-mediated transcription complex. May be involved in sex determination, early gonad development, left-right patterning during embryogenesis and differentiation of the adrenal cortex. This Xenopus tropicalis (Western clawed frog) protein is Cbp/p300-interacting transactivator 2 (cited2).